A 275-amino-acid chain; its full sequence is Leucine-rich repeat-containing protein 3C (275 aa).

The N-terminal stretch at 1–41 (MRMTSSSFVSYCTPGLCQFMAMLPTAGHLLPLLLVIGTGGT) is a signal peptide. The LRRNT domain maps to 42–79 (VPSPQVPPRGCYVAKEAGERTFRCSQAGLSAVPSGIPN). LRR repeat units follow at residues 80–101 (DTRK…AFQH), 104–125 (VLEE…AFQG), and 129–150 (TLRH…AFVG). The N-linked (GlcNAc...) asparagine glycan is linked to Asn-156. Residues 160–212 (NPWHCDCALQEVLRQVRLVPGTGTGIVCGSGARPDLVGQEFLLLAGEEELCGS) enclose the LRRCT domain. The helical transmembrane segment at 225-245 (LLVTMGGWLTLMVAYLVHYVW) threads the bilayer.

Belongs to the LRRC3 family.

It is found in the membrane. This Homo sapiens (Human) protein is Leucine-rich repeat-containing protein 3C (LRRC3C).